A 656-amino-acid chain; its full sequence is UvrABC system protein C (656 aa).

Residues 16 to 95 enclose the GIY-YIG domain; sequence TDPGVYRFRD…IKEYSPRFNV (80 aa). In terms of domain architecture, UVR spans 208–243; the sequence is GRFLRQLEAEMKQAAAAQEYERAARIRDDIQALRTV.

This sequence belongs to the UvrC family. Interacts with UvrB in an incision complex.

It localises to the cytoplasm. The UvrABC repair system catalyzes the recognition and processing of DNA lesions. UvrC both incises the 5' and 3' sides of the lesion. The N-terminal half is responsible for the 3' incision and the C-terminal half is responsible for the 5' incision. In Thermobifida fusca (strain YX), this protein is UvrABC system protein C.